A 407-amino-acid polypeptide reads, in one-letter code: Zinc finger protein 552 (407 aa).

Residues 14–90 enclose the KRAB domain; it reads VTFEDVAVKF…PMAGVSPKKA (77 aa). Residues 91 to 113 form a C2H2-type 1 zinc finger; the sequence is HPCEMCGPILGDILHVADHQGTH. The C2H2-type 2; degenerate zinc-finger motif lies at 119–141; sequence HRCEAWGNKLYDSGNFHQHQNEH. Glycyl lysine isopeptide (Lys-Gly) (interchain with G-Cter in SUMO2) cross-links involve residues Lys176 and Lys198. The C2H2-type 3; degenerate zinc finger occupies 212 to 234; that stretch reads YSCGGCMKHFSTKDILSQHERLL. A C2H2-type 4; degenerate zinc finger spans residues 244–262; that stretch reads ECGKSSSKYDSFSNHQGVH. Residues Lys251 and Lys266 each participate in a glycyl lysine isopeptide (Lys-Gly) (interchain with G-Cter in SUMO2) cross-link. 5 consecutive C2H2-type zinc fingers follow at residues 268 to 290, 296 to 318, 324 to 346, 352 to 374, and 380 to 402; these read YTCG…QRIH, YECE…QRVH, YECS…KRVH, YECS…RRVH, and YGCS…QRVH. Lys308 participates in a covalent cross-link: Glycyl lysine isopeptide (Lys-Gly) (interchain with G-Cter in SUMO2).

It belongs to the krueppel C2H2-type zinc-finger protein family.

It is found in the nucleus. May be involved in transcriptional regulation. The protein is Zinc finger protein 552 (ZNF552) of Homo sapiens (Human).